We begin with the raw amino-acid sequence, 333 residues long: Adenosine deaminase (333 aa).

Residues H12 and H14 each coordinate Zn(2+). Residues H14, D16, and G170 each coordinate substrate. H197 contacts Zn(2+). E200 (proton donor) is an active-site residue. D278 contributes to the Zn(2+) binding site. A substrate-binding site is contributed by D279.

The protein belongs to the metallo-dependent hydrolases superfamily. Adenosine and AMP deaminases family. Adenosine deaminase subfamily. It depends on Zn(2+) as a cofactor.

The enzyme catalyses adenosine + H2O + H(+) = inosine + NH4(+). It catalyses the reaction 2'-deoxyadenosine + H2O + H(+) = 2'-deoxyinosine + NH4(+). Its function is as follows. Catalyzes the hydrolytic deamination of adenosine and 2-deoxyadenosine. The protein is Adenosine deaminase of Shigella boydii serotype 4 (strain Sb227).